The primary structure comprises 212 residues: Large ribosomal subunit protein uL1 (212 aa).

Belongs to the universal ribosomal protein uL1 family. In terms of assembly, part of the 50S ribosomal subunit.

In terms of biological role, binds directly to 23S rRNA. Probably involved in E site tRNA release. Functionally, protein L1 is also a translational repressor protein, it controls the translation of its operon by binding to its mRNA. The protein is Large ribosomal subunit protein uL1 of Methanosphaera stadtmanae (strain ATCC 43021 / DSM 3091 / JCM 11832 / MCB-3).